The chain runs to 379 residues: DNA replication and repair protein RecF (379 aa).

30-37 is a binding site for ATP; the sequence is GDNAQGKS.

Belongs to the RecF family.

The protein resides in the cytoplasm. The RecF protein is involved in DNA metabolism; it is required for DNA replication and normal SOS inducibility. RecF binds preferentially to single-stranded, linear DNA. It also seems to bind ATP. This chain is DNA replication and repair protein RecF, found in Thermosynechococcus vestitus (strain NIES-2133 / IAM M-273 / BP-1).